Consider the following 368-residue polypeptide: Phospho-N-acetylmuramoyl-pentapeptide-transferase (368 aa).

A run of 9 helical transmembrane segments spans residues 30–50 (AAAI…IRYL), 72–92 (LPTM…LLWS), 98–118 (HVWL…IDDY), 139–159 (VALG…SVLM), 170–190 (LTID…TALS), 208–228 (AIVV…VYAT), 238–258 (GGEI…FLWF), 264–286 (EIFM…ALLI), and 345–365 (KIVI…LMTL).

The protein belongs to the glycosyltransferase 4 family. MraY subfamily. Mg(2+) is required as a cofactor.

It localises to the cell inner membrane. It carries out the reaction UDP-N-acetyl-alpha-D-muramoyl-L-alanyl-gamma-D-glutamyl-meso-2,6-diaminopimeloyl-D-alanyl-D-alanine + di-trans,octa-cis-undecaprenyl phosphate = di-trans,octa-cis-undecaprenyl diphospho-N-acetyl-alpha-D-muramoyl-L-alanyl-D-glutamyl-meso-2,6-diaminopimeloyl-D-alanyl-D-alanine + UMP. It functions in the pathway cell wall biogenesis; peptidoglycan biosynthesis. Functionally, catalyzes the initial step of the lipid cycle reactions in the biosynthesis of the cell wall peptidoglycan: transfers peptidoglycan precursor phospho-MurNAc-pentapeptide from UDP-MurNAc-pentapeptide onto the lipid carrier undecaprenyl phosphate, yielding undecaprenyl-pyrophosphoryl-MurNAc-pentapeptide, known as lipid I. The polypeptide is Phospho-N-acetylmuramoyl-pentapeptide-transferase (Chlorobium luteolum (strain DSM 273 / BCRC 81028 / 2530) (Pelodictyon luteolum)).